A 459-amino-acid chain; its full sequence is Inositol-trisphosphate 3-kinase A (459 aa).

Residues 1-26 (MTLPGHPTGMARPRGAGPCSPGLERA) are disordered. 3 positions are modified to omega-N-methylarginine: Arg35, Arg55, and Arg62. The disordered stretch occupies residues 49–164 (AAAGEPRARG…TSEDVGQKSH (116 aa)). Residues 116-132 (RRLSTSSLSSTGSSSLL) are compositionally biased toward low complexity. Residues Ser135 and Ser195 each carry the phosphoserine modification. ATP-binding positions include Ser195, Lys207, 247 to 249 (QDL), and Asp260. Substrate is bound by residues Lys262 and Arg283. A calmodulin-binding region spans residues 285 to 293 (DMYKKMLAV). 310-317 (KPRYMQWR) lines the substrate pocket. ATP is bound by residues Lys334 and Asp414. A substrate-binding site is contributed by Lys417.

Belongs to the inositol phosphokinase (IPK) family.

It is found in the cytoplasm. It localises to the cytoskeleton. The enzyme catalyses 1D-myo-inositol 1,4,5-trisphosphate + ATP = 1D-myo-inositol 1,3,4,5-tetrakisphosphate + ADP + H(+). With respect to regulation, activated by calcium/calmodulin. Functionally, catalyzes the phosphorylation of 1D-myo-inositol 1,4,5-trisphosphate (InsP3) into 1D-myo-inositol 1,3,4,5-tetrakisphosphate and participates to the regulation of calcium homeostasis. This chain is Inositol-trisphosphate 3-kinase A, found in Rattus norvegicus (Rat).